The following is a 598-amino-acid chain: Elongation factor 4 (598 aa).

The tr-type G domain occupies 5-187 (ANIRNFSIIA…ALVEFIPAPT (183 aa)). Residues 17 to 22 (DHGKST) and 134 to 137 (NKID) each bind GTP.

The protein belongs to the TRAFAC class translation factor GTPase superfamily. Classic translation factor GTPase family. LepA subfamily.

It localises to the cell inner membrane. The enzyme catalyses GTP + H2O = GDP + phosphate + H(+). In terms of biological role, required for accurate and efficient protein synthesis under certain stress conditions. May act as a fidelity factor of the translation reaction, by catalyzing a one-codon backward translocation of tRNAs on improperly translocated ribosomes. Back-translocation proceeds from a post-translocation (POST) complex to a pre-translocation (PRE) complex, thus giving elongation factor G a second chance to translocate the tRNAs correctly. Binds to ribosomes in a GTP-dependent manner. This chain is Elongation factor 4, found in Psychrobacter arcticus (strain DSM 17307 / VKM B-2377 / 273-4).